Here is a 456-residue protein sequence, read N- to C-terminus: GPI-anchored protein 13 (456 aa).

Positions 1-23 are cleaved as a signal peptide; sequence MRSPSLAVAATTVLGLFSSSALA. N27 is a glycosylation site (N-linked (GlcNAc...) asparagine). Residue G433 is the site of GPI-anchor amidated glycine attachment. Residues 434–456 constitute a propeptide, removed in mature form; that stretch reads AAAVNVVPTTAFGLFAIILASIF.

The GPI-anchor is attached to the protein in the endoplasmic reticulum and serves to target the protein to the cell surface. There, the glucosamine-inositol phospholipid moiety is cleaved off and the GPI-modified mannoprotein is covalently attached via its lipidless GPI glycan remnant to the 1,6-beta-glucan of the outer cell wall layer.

The protein resides in the secreted. It localises to the cell wall. The protein localises to the membrane. Cell wall protein which contributes to cell wall synthesis and is important for acquiring normal surface properties. Required for virulence in a mouse infection model. This Candida albicans (strain SC5314 / ATCC MYA-2876) (Yeast) protein is GPI-anchored protein 13 (PGA13).